Consider the following 335-residue polypeptide: NmrA-like family domain-containing oxidoreductase ptmS (335 aa).

Residues 12–17 (GATGNQ), 39–43 (RDPNS), 60–61 (DG), 81–88 (INSDDPVF), Lys139, and 163–166 (FLEN) contribute to the NADP(+) site. The tract at residues 161–206 (GYFLENFLFKQGAFIMGGFPWETDAEGYLTWKVPYWGGEEQIPFLS) is interaction with ASS1.

This sequence belongs to the NmrA-type oxidoreductase family.

The protein operates within secondary metabolite biosynthesis. Functionally, nmrA-like family domain-containing oxidoreductase; part of the gene cluster that mediates the biosynthesis of the indole diterpenes penitrems. The geranylgeranyl diphosphate (GGPP) synthase ptmG catalyzes the first step in penitrem biosynthesis via conversion of farnesyl pyrophosphate and isopentyl pyrophosphate into geranylgeranyl pyrophosphate (GGPP). Condensation of indole-3-glycerol phosphate with GGPP by the prenyl transferase ptmC then forms 3-geranylgeranylindole (3-GGI). Epoxidation by the FAD-dependent monooxygenase ptmM leads to a epoxidized-GGI that is substrate of the terpene cyclase ptmB for cyclization to yield paspaline. Paspaline is subsequently converted to 13-desoxypaxilline by the cytochrome P450 monooxygenase ptmP, the latter being then converted to paxilline by the cytochrome P450 monooxygenase ptmQ. Paxilline is converted to beta-paxitriol via C-10 ketoreduction by the short-chain dehydrogenase ptmH which can be monoprenylated at the C-20 by the indole diterpene prenyltransferase ptmD. A two-step elimination (acetylation and elimination) process performed by the O-acetyltransferase ptmV and ptmI leads to the production of the prenylated form of penijanthine. The FAD-linked oxidoreductase ptmO then converts the prenylated form of penijanthine into PC-M5 which is in turn transformed into PC-M4 by the aromatic dimethylallyltransferase ptmE. Five sequential oxidative transformations performed by the cytochrome P450 monooxygenases ptmK, ptmU, ptmL, ptmN and ptmJ yield the various penitrem compounds. PtmK, ptmU and ptmM are involved in the formation of the key bicyclic ring of penitrem C via the formation of the intermediates secopenitrem D and penitrem D. PtmL catalyzes the epoxidation of penitrem D and C to yield penitrem B and F, respectively. PtmJ catalyzes the last benzylic hydroxylation to convert penitrem B to prenitrem E and penitrem F to penitrem A. This chain is NmrA-like family domain-containing oxidoreductase ptmS, found in Penicillium ochrochloron.